The chain runs to 478 residues: Proline--tRNA ligase (478 aa).

It belongs to the class-II aminoacyl-tRNA synthetase family. ProS type 3 subfamily. Homodimer.

It is found in the cytoplasm. It carries out the reaction tRNA(Pro) + L-proline + ATP = L-prolyl-tRNA(Pro) + AMP + diphosphate. Catalyzes the attachment of proline to tRNA(Pro) in a two-step reaction: proline is first activated by ATP to form Pro-AMP and then transferred to the acceptor end of tRNA(Pro). The polypeptide is Proline--tRNA ligase (Clostridium botulinum (strain Loch Maree / Type A3)).